We begin with the raw amino-acid sequence, 353 residues long: Cellulose-complementing protein (353 aa).

Disordered regions lie at residues 1-21 (MSAS…PQDF), 75-94 (PQIA…PAIV), and 117-337 (AVPA…SPRP). The span at 80 to 91 (APPPPPVVPDPP) shows a compositional bias: pro residues. 2 stretches are compositionally biased toward low complexity: residues 117-132 (AVPA…VQAA) and 142-164 (IAEQ…VAAA). Over residues 165–175 (PVPPDPAPVTP) the composition is skewed to pro residues. Composition is skewed to polar residues over residues 196-226 (QVRT…SSIS) and 278-304 (STRS…QASR).

This chain is Cellulose-complementing protein (ccpAX), found in Komagataeibacter xylinus (Gluconacetobacter xylinus).